A 351-amino-acid chain; its full sequence is Methionine import ATP-binding protein MetN (351 aa).

The 246-residue stretch at 4–249 (VQLDHVSVTF…PKAELTQKFV (246 aa)) folds into the ABC transporter domain. Position 41–48 (41–48 (GFSGAGKS)) interacts with ATP.

Belongs to the ABC transporter superfamily. Methionine importer (TC 3.A.1.24) family. As to quaternary structure, the complex is composed of two ATP-binding proteins (MetN), two transmembrane proteins (MetI) and a solute-binding protein (MetQ).

Its subcellular location is the cell membrane. The catalysed reaction is L-methionine(out) + ATP + H2O = L-methionine(in) + ADP + phosphate + H(+). It catalyses the reaction D-methionine(out) + ATP + H2O = D-methionine(in) + ADP + phosphate + H(+). In terms of biological role, part of the ABC transporter complex MetNIQ involved in methionine import. Responsible for energy coupling to the transport system. The polypeptide is Methionine import ATP-binding protein MetN (Lactobacillus delbrueckii subsp. bulgaricus (strain ATCC BAA-365 / Lb-18)).